Consider the following 554-residue polypeptide: Arginine--tRNA ligase (554 aa).

The 'HIGH' region signature appears at 129–139; it reads ANPTGPLHIGH.

It belongs to the class-I aminoacyl-tRNA synthetase family. As to quaternary structure, monomer.

It is found in the cytoplasm. The catalysed reaction is tRNA(Arg) + L-arginine + ATP = L-arginyl-tRNA(Arg) + AMP + diphosphate. This chain is Arginine--tRNA ligase, found in Syntrophotalea carbinolica (strain DSM 2380 / NBRC 103641 / GraBd1) (Pelobacter carbinolicus).